A 367-amino-acid chain; its full sequence is Teichoic acid glycerol-phosphate primase (367 aa).

It belongs to the CDP-glycerol glycerophosphotransferase family.

It is found in the cell membrane. It catalyses the reaction N-acetyl-beta-D-mannosaminyl-(1-&gt;4)-N-acetyl-alpha-D-glucosaminyl di-trans,octa-cis-undecaprenyl diphosphate + CDP-glycerol = 4-O-[(2R)-glycerylphospho]-N-acetyl-beta-D-mannosaminyl-(1-&gt;4)-N-acetyl-alpha-D-glucosaminyl di-trans,octa-cis-undecaprenyl diphosphate + CMP + H(+). The protein operates within cell wall biogenesis; poly(ribitol phosphate) teichoic acid biosynthesis. Catalyzes the addition of a single glycerol phosphate residue to the prenoldiphosphate-linked disaccharide. In Staphylococcus aureus (strain NCTC 8325 / PS 47), this protein is Teichoic acid glycerol-phosphate primase (tarB).